A 38-amino-acid chain; its full sequence is MIEPLLCGIVLGLIPVTLLGLFVAAWNQYRRGGSALGG.

Residues 5–25 form a helical membrane-spanning segment; the sequence is LLCGIVLGLIPVTLLGLFVAA.

The protein belongs to the PetG family. In terms of assembly, the 4 large subunits of the cytochrome b6-f complex are cytochrome b6, subunit IV (17 kDa polypeptide, PetD), cytochrome f and the Rieske protein, while the 4 small subunits are PetG, PetL, PetM and PetN. The complex functions as a dimer.

Its subcellular location is the cellular thylakoid membrane. In terms of biological role, component of the cytochrome b6-f complex, which mediates electron transfer between photosystem II (PSII) and photosystem I (PSI), cyclic electron flow around PSI, and state transitions. PetG is required for either the stability or assembly of the cytochrome b6-f complex. In Parasynechococcus marenigrum (strain WH8102), this protein is Cytochrome b6-f complex subunit 5.